Reading from the N-terminus, the 94-residue chain is uncharacterized protein (94 aa).

Residues 1–25 form the signal peptide; that stretch reads MRAAIAVLFIALVGLATYHLVMSQA.

This is an uncharacterized protein from Archaeoglobus fulgidus (strain ATCC 49558 / DSM 4304 / JCM 9628 / NBRC 100126 / VC-16).